We begin with the raw amino-acid sequence, 340 residues long: Uroporphyrinogen decarboxylase (340 aa).

Substrate is bound by residues 23–27, Asp-72, Tyr-147, Thr-202, and His-316; that span reads RQAGR.

It belongs to the uroporphyrinogen decarboxylase family. As to quaternary structure, homodimer.

The protein resides in the cytoplasm. It carries out the reaction uroporphyrinogen III + 4 H(+) = coproporphyrinogen III + 4 CO2. It participates in porphyrin-containing compound metabolism; protoporphyrin-IX biosynthesis; coproporphyrinogen-III from 5-aminolevulinate: step 4/4. Functionally, catalyzes the decarboxylation of four acetate groups of uroporphyrinogen-III to yield coproporphyrinogen-III. This is Uroporphyrinogen decarboxylase from Geobacter metallireducens (strain ATCC 53774 / DSM 7210 / GS-15).